An 811-amino-acid chain; its full sequence is E3 ubiquitin-protein ligase RNF10 (811 aa).

The span at 1 to 10 shows a compositional bias: polar residues; the sequence is MPLSSPNAAA. The segment at 1–119 is disordered; that stretch reads MPLSSPNAAA…SFNGGRRDEV (119 aa). A Phosphoserine modification is found at Ser5. Composition is skewed to low complexity over residues 18 to 31, 78 to 90, and 104 to 113; these read NSGS…SGSS, NNQS…QKSK, and SKLFSSSFNG. The tract at residues 101-185 is interaction with MEOX2; that stretch reads GGSSKLFSSS…FNKELFLQAN (85 aa). Phosphoserine is present on residues Ser110 and Ser128. The RING-type zinc finger occupies 225–267; sequence CPICLYPPTAAKITRCGHIFCWACILHYLSLSEKTWSKCPICY. Positions 653–662 are enriched in polar residues; that stretch reads DSALGPTSTE. Disordered stretches follow at residues 653-672, 724-761, and 776-811; these read DSAL…ISPL, DVWP…VPSF, and LDTP…VHTK. Over residues 724–736 the composition is skewed to basic and acidic residues; sequence DVWPKTAPKKDEN. Polar residues predominate over residues 802–811; sequence LFSTSVVHTK.

This sequence belongs to the RNF10 family. Interacts with MEOX2.

The protein resides in the cytoplasm. It localises to the nucleus. It carries out the reaction S-ubiquitinyl-[E2 ubiquitin-conjugating enzyme]-L-cysteine + [acceptor protein]-L-lysine = [E2 ubiquitin-conjugating enzyme]-L-cysteine + N(6)-ubiquitinyl-[acceptor protein]-L-lysine.. It functions in the pathway protein modification; protein ubiquitination. E3 ubiquitin-protein ligase that catalyzes monoubiquitination of 40S ribosomal proteins RPS2/us5 and RPS3/us3 in response to ribosome stalling. Part of a ribosome quality control that takes place when ribosomes have stalled during translation initiation (iRQC): RNF10 acts by mediating monoubiquitination of RPS2/us5 and RPS3/us3, promoting their degradation by the proteasome. Also promotes ubiquitination of 40S ribosomal proteins in response to ribosome stalling during translation elongation. The action of RNF10 in iRQC is counteracted by USP10. May also act as a transcriptional factor involved in the regulation of MAG (Myelin-associated glycoprotein) expression. Acts as a regulator of Schwann cell differentiation and myelination. The chain is E3 ubiquitin-protein ligase RNF10 from Homo sapiens (Human).